A 482-amino-acid chain; its full sequence is tRNA sulfurtransferase (482 aa).

The THUMP domain maps to 61-165 (PAIRDALTRI…NDRLLLVKGR (105 aa)). ATP-binding positions include 183 to 184 (LI), K265, G287, and Q296. C344 and C456 are joined by a disulfide. In terms of domain architecture, Rhodanese spans 404–482 (FGANDAILDI…GFSNVKVYRP (79 aa)). The Cysteine persulfide intermediate role is filled by C456.

This sequence belongs to the ThiI family.

The protein localises to the cytoplasm. It catalyses the reaction [ThiI sulfur-carrier protein]-S-sulfanyl-L-cysteine + a uridine in tRNA + 2 reduced [2Fe-2S]-[ferredoxin] + ATP + H(+) = [ThiI sulfur-carrier protein]-L-cysteine + a 4-thiouridine in tRNA + 2 oxidized [2Fe-2S]-[ferredoxin] + AMP + diphosphate. The enzyme catalyses [ThiS sulfur-carrier protein]-C-terminal Gly-Gly-AMP + S-sulfanyl-L-cysteinyl-[cysteine desulfurase] + AH2 = [ThiS sulfur-carrier protein]-C-terminal-Gly-aminoethanethioate + L-cysteinyl-[cysteine desulfurase] + A + AMP + 2 H(+). The protein operates within cofactor biosynthesis; thiamine diphosphate biosynthesis. In terms of biological role, catalyzes the ATP-dependent transfer of a sulfur to tRNA to produce 4-thiouridine in position 8 of tRNAs, which functions as a near-UV photosensor. Also catalyzes the transfer of sulfur to the sulfur carrier protein ThiS, forming ThiS-thiocarboxylate. This is a step in the synthesis of thiazole, in the thiamine biosynthesis pathway. The sulfur is donated as persulfide by IscS. The protein is tRNA sulfurtransferase of Klebsiella pneumoniae subsp. pneumoniae (strain ATCC 700721 / MGH 78578).